The sequence spans 96 residues: Redox-responsive transcriptional regulator WhiB3 (96 aa).

Residues 22-86 (LCRGVDSSMF…GGLSESEREL (65 aa)) enclose the 4Fe-4S Wbl-type domain. 4 residues coordinate [4Fe-4S] cluster: C23, C53, C56, and C62.

This sequence belongs to the WhiB family. [4Fe-4S] cluster serves as cofactor. Post-translationally, the Fe-S cluster can be nitrosylated by nitric oxide (NO). Upon Fe-S cluster removal intramolecular disulfide bonds are formed.

Its subcellular location is the cytoplasm. Its function is as follows. A redox-sensitive transcriptional regulator. Maintains intracellular redox homeostasis by regulating catabolic metabolism and polyketide biosynthesis. Regulates expression of the redox buffer ergothioneine (ERG). In concert with myothiol (MSH), another redox buffer, responds to low pH leading to acid resistance. The apo- but not holo-form probably binds DNA. The sequence is that of Redox-responsive transcriptional regulator WhiB3 (whiB3) from Mycolicibacterium smegmatis (strain ATCC 700084 / mc(2)155) (Mycobacterium smegmatis).